A 687-amino-acid polypeptide reads, in one-letter code: C-mannosyltransferase dpy-19 (687 aa).

11 helical membrane passes run 24 to 44 (GISG…VGFL), 170 to 190 (ITGV…LGVL), 191 to 211 (VSDS…NHGE), 223 to 243 (ESFA…IIKY), 253 to 273 (LLIS…FAFF), 276 to 296 (ICSI…AKTI), 303 to 323 (AFFI…ALYF), 324 to 344 (PSIW…GIRL), 347 to 367 (LYLL…KVGF), 415 to 435 (LSST…SWDF), and 454 to 474 (GEVI…VLIM).

Belongs to the dpy-19 family.

Its subcellular location is the endoplasmic reticulum membrane. Its function is as follows. C-mannosyltransferase that mediates C-mannosylation of tryptophan residues on target proteins such as unc-5 and mig-21. Mediates the attachment of alpha-mannose in C-C linkage to the C2 of the indole ring of tryptophan. C-mannosylation takes place in the endoplasmic reticulum and frequently found in thrombospondin (TSP) type-1 repeats and in the WSXWS motif of type I cytokine receptors. Required to orient neuroblasts QL and QR correctly on the anterior/posterior (A/P) axis: QL and QR are born in the same A/P position, but polarize and migrate left/right asymmetrically, QL migrates toward the posterior and QR migrates toward the anterior. Required with unc-40 to express mab-5 correctly in the Q cell descendants. This is C-mannosyltransferase dpy-19 from Caenorhabditis briggsae.